Reading from the N-terminus, the 684-residue chain is Actin-related protein 5 (684 aa).

Residues 262 to 469 adopt a coiled-coil conformation; that stretch reads KEKSVIIQLP…ARQKQKQKAN (208 aa). Disordered regions lie at residues 392–443 and 481–500; these read KEKK…PEHY and VNPT…EDPE. Residues 402–443 show a composition bias toward basic and acidic residues; that stretch reads SMKDGRLAQKRKRDEEKEKEKEKEEERDRQEEESFLKDPEHY.

The protein belongs to the actin family. ARP5 subfamily. Component of the chromatin-remodeling Ino80 complex.

The protein resides in the nucleus. Proposed core component of the chromatin remodeling Ino80 complex which is involved in transcriptional regulation, DNA replication and probably DNA repair. The protein is Actin-related protein 5 (arpE) of Dictyostelium discoideum (Social amoeba).